The following is a 201-amino-acid chain: Transcriptional regulator GfcR (201 aa).

The protein belongs to the purine/pyrimidine phosphoribosyltransferase family. GfcR subfamily.

In Methanobrevibacter smithii (strain ATCC 35061 / DSM 861 / OCM 144 / PS), this protein is Transcriptional regulator GfcR.